The primary structure comprises 199 residues: MTRCDDRPSASQISITHVTQGSCVASASPNEVYATILGSCICTCMCDPVAGVGGMNHFLLPSADVEDAQHLRYGSHAMELLINALLKLGAARQRIEAKIFGGAMMTPQLGAIGQANAAFARRYLRDEGIRCTAHSLGGNRARRIRFWPKTGRVQQMFLGSEDVVPNEQPQFRLQGGAGDVTFFDRHNNAEMPDPIKEPR.

It belongs to the CheD family.

The catalysed reaction is L-glutaminyl-[protein] + H2O = L-glutamyl-[protein] + NH4(+). Functionally, probably deamidates glutamine residues to glutamate on methyl-accepting chemotaxis receptors (MCPs), playing an important role in chemotaxis. This chain is Probable chemoreceptor glutamine deamidase CheD, found in Cereibacter sphaeroides (strain ATCC 17029 / ATH 2.4.9) (Rhodobacter sphaeroides).